The sequence spans 262 residues: MALGIRCFRLLHPAFSSYLADLSRPVSEVPMKTVRGRQRDHIQYSAHPAVPVRQFATKKAKAKGKGQPQARVNINTALVEDIISLEEVDEDMKSVMEALKDNFNKTLNIRTAPGSLDHITVVTADGKLALNQIGQISMKSPQLILVNMASFPECTAAAIKAIRESGMNLNPEVEGTLIRVPIPKVTREHREMLVKLAKQNTNKAKENLRKVRTNAMNKLKKSKDKTSEDTIRLIEKQISQMADDTVAELDRHLAAKTKELLG.

The N-terminal 55 residues, M1–F55, are a transit peptide targeting the mitochondrion.

This sequence belongs to the RRF family.

The protein localises to the mitochondrion. Functionally, responsible for the disassembly of ribosomes from messenger RNA at the termination of mitochondrial protein biosynthesis. Acts in collaboration with GFM2. Promotes mitochondrial ribosome recycling by dissolution of intersubunit contacts. This Rattus norvegicus (Rat) protein is Ribosome-recycling factor, mitochondrial (Mrrf).